Here is a 308-residue protein sequence, read N- to C-terminus: Putative integrase/recombinase y4qK (308 aa).

In terms of domain architecture, Core-binding (CB) spans 15–97; it reads LVMTPLRQRM…ALRFFFSVTL (83 aa). One can recognise a Tyr recombinase domain in the interval 115–288; the sequence is KLPIILSPDE…ATNKVCATSS (174 aa). Catalysis depends on residues arginine 150, lysine 175, histidine 240, arginine 243, and histidine 266. The O-(3'-phospho-DNA)-tyrosine intermediate role is filled by tyrosine 275.

Belongs to the 'phage' integrase family.

Functionally, may function as an integrase. The polypeptide is Putative integrase/recombinase y4qK (Sinorhizobium fredii (strain NBRC 101917 / NGR234)).